Reading from the N-terminus, the 305-residue chain is Porphobilinogen deaminase (305 aa).

An S-(dipyrrolylmethanemethyl)cysteine modification is found at C240.

It belongs to the HMBS family. As to quaternary structure, monomer. It depends on dipyrromethane as a cofactor.

The catalysed reaction is 4 porphobilinogen + H2O = hydroxymethylbilane + 4 NH4(+). It functions in the pathway porphyrin-containing compound metabolism; protoporphyrin-IX biosynthesis; coproporphyrinogen-III from 5-aminolevulinate: step 2/4. Its function is as follows. Tetrapolymerization of the monopyrrole PBG into the hydroxymethylbilane pre-uroporphyrinogen in several discrete steps. The chain is Porphobilinogen deaminase (hemC) from Xylella fastidiosa (strain 9a5c).